A 770-amino-acid polypeptide reads, in one-letter code: Protein PAT1 homolog 1 (770 aa).

The tract at residues methionine 1 to valine 42 is disordered. Residues methionine 1–glutamate 84 form a region A; interaction with DDX6/RCK region. An involved in nuclear foci localization region spans residues methionine 1 to arginine 397. The span at leucine 7–asparagine 33 shows a compositional bias: acidic residues. The segment at asparagine 85–histidine 388 is region N; interaction with decapping machinery. The short motif at leucine 86–isoleucine 95 is the Nuclear export signal element. The interval proline 155–proline 195 is disordered. Serine 177 is modified (phosphoserine). Residue threonine 178 is modified to Phosphothreonine. A phosphoserine mark is found at serine 179 and serine 184. Residue threonine 194 is modified to Phosphothreonine. 3 positions are modified to asymmetric dimethylarginine: arginine 217, arginine 223, and arginine 263. An involved in RNA-binding region spans residues arginine 223–arginine 397. A Phosphoserine modification is found at serine 278. Arginine 284 is subject to Asymmetric dimethylarginine. Disordered regions lie at residues phenylalanine 319–leucine 340 and histidine 376–leucine 396. Positions alanine 321–glycine 337 are enriched in pro residues. The residue at position 385 (arginine 385) is an Omega-N-methylarginine. The span at arginine 385 to leucine 396 shows a compositional bias: basic and acidic residues. Residues glutamine 389–glutamate 448 are region H. Residues lysine 398–arginine 770 are involved in nuclear speckle localization. The tract at residues isoleucine 449–arginine 770 is region C.

Belongs to the PAT1 family. In terms of assembly, interacts (via region A) with DDX6/RCK. Interacts (via region H and region C) with LSM1 and LSM4. Interacts (via region N) with DCP1A, DCP2, EDC3, EDC4 and XRN1. Interacts with the CCR4-NOT complex. Interacts with the Lsm-containing SMN-Sm protein complex. Interacts with EIF4ENIF1/4E-T.

The protein resides in the cytoplasm. Its subcellular location is the P-body. The protein localises to the nucleus. It localises to the PML body. It is found in the nucleus speckle. In terms of biological role, RNA-binding protein involved in deadenylation-dependent decapping of mRNAs, leading to the degradation of mRNAs. Acts as a scaffold protein that connects deadenylation and decapping machinery. Required for cytoplasmic mRNA processing body (P-body) assembly. The protein is Protein PAT1 homolog 1 (Patl1) of Mus musculus (Mouse).